A 694-amino-acid chain; its full sequence is Polyribonucleotide nucleotidyltransferase (694 aa).

2 residues coordinate Mg(2+): Asp-486 and Asp-492. Positions 553-612 (PRIETMQIKPTKIASVIGPGGKQIRQIIEETGVQIDVNDLGVVSISASSASAINKAKEII) constitute a KH domain. The 69-residue stretch at 622–690 (GKTYRGRVTS…EKGQLKLSHK (69 aa)) folds into the S1 motif domain.

It belongs to the polyribonucleotide nucleotidyltransferase family. The cofactor is Mg(2+).

It is found in the cytoplasm. The catalysed reaction is RNA(n+1) + phosphate = RNA(n) + a ribonucleoside 5'-diphosphate. Involved in mRNA degradation. Catalyzes the phosphorolysis of single-stranded polyribonucleotides processively in the 3'- to 5'-direction. The polypeptide is Polyribonucleotide nucleotidyltransferase (Chlamydia pneumoniae (Chlamydophila pneumoniae)).